Reading from the N-terminus, the 853-residue chain is DNA topoisomerase 1 (853 aa).

One can recognise a Toprim domain in the interval 3-136 (KSLVIVESPV…KFRRVVFNEI (134 aa)). The Mg(2+) site is built by Glu9 and Asp105. Positions 152–565 (NMNRVYSQQA…SFFDNFSQQL (414 aa)) constitute a Topo IA-type catalytic domain. Residues 186–191 (SAGRVQ) form an interaction with DNA region. The active-site O-(5'-phospho-DNA)-tyrosine intermediate is the Tyr313. 3 C4-type zinc fingers span residues 589-621 (CSLC…EKRC), 649-676 (CKKC…NPSC), and 699-724 (CEKC…NDTC).

The protein belongs to the type IA topoisomerase family. As to quaternary structure, monomer. Mg(2+) is required as a cofactor.

The catalysed reaction is ATP-independent breakage of single-stranded DNA, followed by passage and rejoining.. Functionally, releases the supercoiling and torsional tension of DNA, which is introduced during the DNA replication and transcription, by transiently cleaving and rejoining one strand of the DNA duplex. Introduces a single-strand break via transesterification at a target site in duplex DNA. The scissile phosphodiester is attacked by the catalytic tyrosine of the enzyme, resulting in the formation of a DNA-(5'-phosphotyrosyl)-enzyme intermediate and the expulsion of a 3'-OH DNA strand. The free DNA strand then undergoes passage around the unbroken strand, thus removing DNA supercoils. Finally, in the religation step, the DNA 3'-OH attacks the covalent intermediate to expel the active-site tyrosine and restore the DNA phosphodiester backbone. This Buchnera aphidicola subsp. Schizaphis graminum (strain Sg) protein is DNA topoisomerase 1.